We begin with the raw amino-acid sequence, 312 residues long: Malate dehydrogenase (312 aa).

Residues 7-13 and D34 each bind NAD(+); that span reads GAAGGIG. Residues R81 and R87 each coordinate substrate. NAD(+) contacts are provided by residues N94 and 117-119; that span reads ITN. Residues N119 and R153 each coordinate substrate. H177 (proton acceptor) is an active-site residue. M227 provides a ligand contact to NAD(+).

It belongs to the LDH/MDH superfamily. MDH type 1 family. As to quaternary structure, homodimer.

The catalysed reaction is (S)-malate + NAD(+) = oxaloacetate + NADH + H(+). Catalyzes the reversible oxidation of malate to oxaloacetate. The polypeptide is Malate dehydrogenase (Escherichia coli O7:K1 (strain IAI39 / ExPEC)).